The following is a 257-amino-acid chain: Phosphonates import ATP-binding protein PhnC (257 aa).

The ABC transporter domain maps to Ile-2–Ala-246. Residue Gly-35–Ser-42 coordinates ATP.

The protein belongs to the ABC transporter superfamily. Phosphonates importer (TC 3.A.1.9.1) family. The complex is composed of two ATP-binding proteins (PhnC), two transmembrane proteins (PhnE) and a solute-binding protein (PhnD).

The protein resides in the cell membrane. It catalyses the reaction phosphonate(out) + ATP + H2O = phosphonate(in) + ADP + phosphate + H(+). Part of the ABC transporter complex PhnCDE involved in phosphonates import. Responsible for energy coupling to the transport system. This is Phosphonates import ATP-binding protein PhnC from Bacillus cereus (strain ZK / E33L).